A 598-amino-acid chain; its full sequence is Fumarate reductase flavoprotein subunit (598 aa).

Residues 12–16, 36–38, 44–52, 156–158, and D212 each bind FAD; these read GAGGA, ISK, SHTVAAEGG, and HFV. H45 is modified (tele-8alpha-FAD histidine). Active-site residues include H233 and R249. FAD is bound by residues 356–357, E380, and 391–397; these read HY and RLGSNSL. The interval 577 to 598 is disordered; it reads AKRVYGGEADAQEKSDKEQANG. Basic and acidic residues predominate over residues 587–598; it reads AQEKSDKEQANG.

The protein belongs to the FAD-dependent oxidoreductase 2 family. FRD/SDH subfamily. As to quaternary structure, part of an enzyme complex containing four subunits: a flavoprotein (FrdA), an iron-sulfur protein (FrdB), and two hydrophobic anchor proteins (FrdC and FrdD). Interacts with SdhE. FAD serves as cofactor.

It localises to the cell inner membrane. The enzyme catalyses a quinone + succinate = fumarate + a quinol. It carries out the reaction a menaquinone + succinate = a menaquinol + fumarate. Two distinct, membrane-bound, FAD-containing enzymes are responsible for the catalysis of fumarate and succinate interconversion; the fumarate reductase is used in anaerobic growth, and the succinate dehydrogenase is used in aerobic growth. The sequence is that of Fumarate reductase flavoprotein subunit from Serratia sp. (strain ATCC 39006) (Prodigiosinella confusarubida).